The chain runs to 186 residues: Holliday junction branch migration complex subunit RuvA (186 aa).

Positions 1 to 63 (MNDYINGLLH…DNVFKYYGFK (63 aa)) are domain I. Residues 64–137 (NQLIRDLFEL…QKELFNNKIS (74 aa)) form a domain II region. A region of interest (flexible linker) is located at residue Ser137. The tract at residues 137 to 186 (SDKKNKVITSLEKLGYKTKDIYKIIINIDEDMNIEDLTKYVLEQLSYLHN) is domain III.

This sequence belongs to the RuvA family. In terms of assembly, homotetramer. Forms an RuvA(8)-RuvB(12)-Holliday junction (HJ) complex. HJ DNA is sandwiched between 2 RuvA tetramers; dsDNA enters through RuvA and exits via RuvB. An RuvB hexamer assembles on each DNA strand where it exits the tetramer. Each RuvB hexamer is contacted by two RuvA subunits (via domain III) on 2 adjacent RuvB subunits; this complex drives branch migration. In the full resolvosome a probable DNA-RuvA(4)-RuvB(12)-RuvC(2) complex forms which resolves the HJ.

The protein resides in the cytoplasm. Functionally, the RuvA-RuvB-RuvC complex processes Holliday junction (HJ) DNA during genetic recombination and DNA repair, while the RuvA-RuvB complex plays an important role in the rescue of blocked DNA replication forks via replication fork reversal (RFR). RuvA specifically binds to HJ cruciform DNA, conferring on it an open structure. The RuvB hexamer acts as an ATP-dependent pump, pulling dsDNA into and through the RuvAB complex. HJ branch migration allows RuvC to scan DNA until it finds its consensus sequence, where it cleaves and resolves the cruciform DNA. This Mycoplasma mycoides subsp. mycoides SC (strain CCUG 32753 / NCTC 10114 / PG1) protein is Holliday junction branch migration complex subunit RuvA.